We begin with the raw amino-acid sequence, 1257 residues long: Probable aldehyde oxidase gad-3 (1257 aa).

The 2Fe-2S ferredoxin-type domain occupies 4-91 (TGIFFNVNGK…KTFVITVEGV (88 aa)). Residues C43, C48, C51, and C73 each coordinate [2Fe-2S] cluster. Residues 229–459 (LKGDRIELLL…TSLEVHIDAL (231 aa)) form the FAD-binding PCMH-type domain. Catalysis depends on E1208, which acts as the Proton acceptor.

The protein belongs to the xanthine dehydrogenase family. It depends on [2Fe-2S] cluster as a cofactor. Requires FAD as cofactor. Mo-molybdopterin is required as a cofactor.

The enzyme catalyses an aldehyde + O2 + H2O = a carboxylate + H2O2 + H(+). In terms of biological role, may be involved in the metabolism of 1-methylnicotinamide (MNA). Linked to regulation of longevity through generation of reactive oxygen species, where it probably functions in a pathway downstream of the sirtuin sir-2.1 and the nicotinamide N-methyltransferase anmt-1. The sequence is that of Probable aldehyde oxidase gad-3 from Caenorhabditis elegans.